Consider the following 127-residue polypeptide: Small ribosomal subunit protein uS13 (127 aa).

A compositionally biased stretch (basic residues) spans 96–118 (LPVRGQRTHTNARTRKGPKRGIV). A disordered region spans residues 96–127 (LPVRGQRTHTNARTRKGPKRGIVRAKPAAPAR).

It belongs to the universal ribosomal protein uS13 family. As to quaternary structure, part of the 30S ribosomal subunit. Forms a loose heterodimer with protein S19. Forms two bridges to the 50S subunit in the 70S ribosome.

Functionally, located at the top of the head of the 30S subunit, it contacts several helices of the 16S rRNA. In the 70S ribosome it contacts the 23S rRNA (bridge B1a) and protein L5 of the 50S subunit (bridge B1b), connecting the 2 subunits; these bridges are implicated in subunit movement. Contacts the tRNAs in the A and P-sites. In Myxococcus xanthus (strain DK1622), this protein is Small ribosomal subunit protein uS13.